Reading from the N-terminus, the 363-residue chain is NAD(P)H-quinone oxidoreductase subunit 1, chloroplastic (363 aa).

The next 6 helical transmembrane spans lie at 30–50 (LVPI…IVWL), 98–118 (FSIG…VIPF), 129–149 (IGIF…LMSG), 248–268 (YSGI…LLSS), 300–320 (IIGT…FLFI), and 343–363 (FLLP…LLSL).

Belongs to the complex I subunit 1 family. In terms of assembly, NDH is composed of at least 16 different subunits, 5 of which are encoded in the nucleus.

Its subcellular location is the plastid. It is found in the chloroplast thylakoid membrane. It catalyses the reaction a plastoquinone + NADH + (n+1) H(+)(in) = a plastoquinol + NAD(+) + n H(+)(out). It carries out the reaction a plastoquinone + NADPH + (n+1) H(+)(in) = a plastoquinol + NADP(+) + n H(+)(out). Functionally, NDH shuttles electrons from NAD(P)H:plastoquinone, via FMN and iron-sulfur (Fe-S) centers, to quinones in the photosynthetic chain and possibly in a chloroplast respiratory chain. The immediate electron acceptor for the enzyme in this species is believed to be plastoquinone. Couples the redox reaction to proton translocation, and thus conserves the redox energy in a proton gradient. This chain is NAD(P)H-quinone oxidoreductase subunit 1, chloroplastic, found in Gossypium hirsutum (Upland cotton).